The chain runs to 367 residues: Phosphoribosylaminoimidazole-succinocarboxamide synthase (367 aa).

This sequence belongs to the SAICAR synthetase family.

The enzyme catalyses 5-amino-1-(5-phospho-D-ribosyl)imidazole-4-carboxylate + L-aspartate + ATP = (2S)-2-[5-amino-1-(5-phospho-beta-D-ribosyl)imidazole-4-carboxamido]succinate + ADP + phosphate + 2 H(+). It participates in purine metabolism; IMP biosynthesis via de novo pathway; 5-amino-1-(5-phospho-D-ribosyl)imidazole-4-carboxamide from 5-amino-1-(5-phospho-D-ribosyl)imidazole-4-carboxylate: step 1/2. This is Phosphoribosylaminoimidazole-succinocarboxamide synthase from Shewanella sp. (strain ANA-3).